The sequence spans 380 residues: Tryptophan--tRNA ligase (380 aa).

Residues 81–89 (PSLGMHIGH) carry the 'HIGH' region motif. The 'KMSKS' region motif lies at 253–257 (KMSSS).

The protein belongs to the class-I aminoacyl-tRNA synthetase family.

Its subcellular location is the cytoplasm. It carries out the reaction tRNA(Trp) + L-tryptophan + ATP = L-tryptophyl-tRNA(Trp) + AMP + diphosphate + H(+). The sequence is that of Tryptophan--tRNA ligase from Saccharolobus solfataricus (strain ATCC 35092 / DSM 1617 / JCM 11322 / P2) (Sulfolobus solfataricus).